Consider the following 417-residue polypeptide: Serine hydroxymethyltransferase 1 (417 aa).

(6S)-5,6,7,8-tetrahydrofolate is bound by residues Leu121 and 125–127 (GHL). Lys230 is subject to N6-(pyridoxal phosphate)lysine. 355–357 (SPF) serves as a coordination point for (6S)-5,6,7,8-tetrahydrofolate.

Belongs to the SHMT family. In terms of assembly, homodimer. Pyridoxal 5'-phosphate serves as cofactor.

The protein resides in the cytoplasm. It carries out the reaction (6R)-5,10-methylene-5,6,7,8-tetrahydrofolate + glycine + H2O = (6S)-5,6,7,8-tetrahydrofolate + L-serine. The protein operates within one-carbon metabolism; tetrahydrofolate interconversion. Its pathway is amino-acid biosynthesis; glycine biosynthesis; glycine from L-serine: step 1/1. Functionally, catalyzes the reversible interconversion of serine and glycine with tetrahydrofolate (THF) serving as the one-carbon carrier. This reaction serves as the major source of one-carbon groups required for the biosynthesis of purines, thymidylate, methionine, and other important biomolecules. Also exhibits THF-independent aldolase activity toward beta-hydroxyamino acids, producing glycine and aldehydes, via a retro-aldol mechanism. The chain is Serine hydroxymethyltransferase 1 from Pseudomonas syringae pv. tomato (strain ATCC BAA-871 / DC3000).